We begin with the raw amino-acid sequence, 492 residues long: GTPase Der (492 aa).

In terms of domain architecture, EngA-type G 1 spans 3-166 (PVIALVGRPN…AVLGIFPKDA (164 aa)). Residues 9–16 (GRPNVGKS), 56–60 (DTGGI), and 118–121 (NKVD) each bind GTP. Residues 166 to 190 (AGEPEEGAEAEEEVQEGQEAKRIPG) form a disordered region. Positions 168–181 (EPEEGAEAEEEVQE) are enriched in acidic residues. The EngA-type G 2 domain maps to 197 to 370 (IKLAIIGRPN…SVQAAFHSAV (174 aa)). GTP contacts are provided by residues 203-210 (GRPNVGKS), 250-254 (DTAGV), and 315-318 (NKWD). Positions 371 to 455 (TRWPTSRLTQ…PIRIEYKGGE (85 aa)) constitute a KH-like domain. The disordered stretch occupies residues 453 to 492 (GGENPYEGNKNKLTDRQVNKKRRLMSHHKKAEKKRKDKRK). A compositionally biased stretch (basic and acidic residues) spans 461–470 (NKNKLTDRQV). Residues 471–492 (NKKRRLMSHHKKAEKKRKDKRK) are compositionally biased toward basic residues.

The protein belongs to the TRAFAC class TrmE-Era-EngA-EngB-Septin-like GTPase superfamily. EngA (Der) GTPase family. As to quaternary structure, associates with the 50S ribosomal subunit.

GTPase that plays an essential role in the late steps of ribosome biogenesis. In Ectopseudomonas mendocina (strain ymp) (Pseudomonas mendocina), this protein is GTPase Der.